Consider the following 240-residue polypeptide: Uridylate kinase (240 aa).

An ATP-binding site is contributed by 13–16; that stretch reads KLSG. The involved in allosteric activation by GTP stretch occupies residues 21–26; it reads GDKGFG. Glycine 55 is a binding site for UMP. Positions 56 and 60 each coordinate ATP. UMP contacts are provided by residues aspartate 75 and 136-143; that span reads IGNPYFST. The ATP site is built by asparagine 164, tyrosine 170, and aspartate 173.

This sequence belongs to the UMP kinase family. In terms of assembly, homohexamer.

It is found in the cytoplasm. The enzyme catalyses UMP + ATP = UDP + ADP. It functions in the pathway pyrimidine metabolism; CTP biosynthesis via de novo pathway; UDP from UMP (UMPK route): step 1/1. With respect to regulation, allosterically activated by GTP. Inhibited by UTP. In terms of biological role, catalyzes the reversible phosphorylation of UMP to UDP. This Staphylococcus epidermidis (strain ATCC 35984 / DSM 28319 / BCRC 17069 / CCUG 31568 / BM 3577 / RP62A) protein is Uridylate kinase.